The chain runs to 429 residues: Adenylosuccinate synthetase (429 aa).

GTP contacts are provided by residues 12 to 18 and 40 to 42; these read GDEGKGK and GHT. The Proton acceptor role is filled by Asp13. Residues Asp13 and Gly40 each coordinate Mg(2+). IMP-binding positions include 13–16, 38–41, Thr128, Arg142, Gln223, Thr238, and Arg302; these read DEGK and NAGH. The Proton donor role is filled by His41. Residue 298–304 coordinates substrate; the sequence is TVTGRPR. GTP is bound by residues Arg304, 330–332, and 412–414; these read LLD and SVG.

It belongs to the adenylosuccinate synthetase family. Homodimer. Mg(2+) is required as a cofactor.

It is found in the cytoplasm. The enzyme catalyses IMP + L-aspartate + GTP = N(6)-(1,2-dicarboxyethyl)-AMP + GDP + phosphate + 2 H(+). It functions in the pathway purine metabolism; AMP biosynthesis via de novo pathway; AMP from IMP: step 1/2. Its function is as follows. Plays an important role in the de novo pathway of purine nucleotide biosynthesis. Catalyzes the first committed step in the biosynthesis of AMP from IMP. This Lactobacillus helveticus (strain DPC 4571) protein is Adenylosuccinate synthetase.